The primary structure comprises 530 residues: MNKLELWQRYRKYLGVYPEIGMMLDLSRMNFPDDFFQLMEPLMQQALEQMAELERGGIANGDEKRMVGHYWLRNPELAPTKEISSEIGFTLRAIKEFTENIHSGAISPPNGSRYTRMLIIGIGGSALGPQFVADALGSAKDKITPFFFDNTDPDGMDLVLARIGSYLKETLTIVISKSGGTKETRNGMLEAKKAYEDRGLLFARQAVAVTGRDSELDRTAAAEGWLARFPMWDWIGGRTSVTSAVGLLPAALQGLDIDGLLEGARLCDMVTRIRETRNNPAALLALMWHYATGGCGAKDMVILPYKDRLLLFSRYLQQLIMESIGKEFDRNGTQANQGIAVYGNKGSTDQHAYVQQLREGINNFFVTFIEVLKDRNGRSIEVDPGVTSGDYLSGFFQGTREALYEKGRESITITVDELSPRTIGVLIALYERAVGFYASLVNINAYHQPGVEAGKKAAGVVLEIQGKVLAHLQEKKGRGFTAEELAAAIGAEGEAEAIYRILLHAAANPDHSVVAEKGRTVFDKKFYHGG.

The active-site Proton donor is the glutamate 322. Active-site residues include histidine 351 and lysine 455.

The protein belongs to the GPI family.

It is found in the cytoplasm. It catalyses the reaction alpha-D-glucose 6-phosphate = beta-D-fructose 6-phosphate. It functions in the pathway carbohydrate biosynthesis; gluconeogenesis. Its pathway is carbohydrate degradation; glycolysis; D-glyceraldehyde 3-phosphate and glycerone phosphate from D-glucose: step 2/4. Catalyzes the reversible isomerization of glucose-6-phosphate to fructose-6-phosphate. This chain is Glucose-6-phosphate isomerase, found in Geotalea daltonii (strain DSM 22248 / JCM 15807 / FRC-32) (Geobacter daltonii).